Here is a 1004-residue protein sequence, read N- to C-terminus: 26S proteasome non-ATPase regulatory subunit 1 homolog A (1004 aa).

Ala2 carries the N-acetylalanine modification. Lys166 participates in a covalent cross-link: Glycyl lysine isopeptide (Lys-Gly) (interchain with G-Cter in ubiquitin). 10 PC repeats span residues 412 to 447, 452 to 485, 487 to 521, 522 to 555, 557 to 590, 591 to 626, 627 to 659, 661 to 695, 696 to 736, and 739 to 771; these read SATA…GGSP, GALY…EVIQ, GACL…VAGE, AAGI…EKII, GLAL…IIRY, GGMY…DVRR, TAVL…PHVR, GAAL…FVRQ, GALI…DTMS, and GAIL…TAVI. Disordered stretches follow at residues 858 to 905 and 959 to 1004; these read EQKA…KKAP and VLSL…EYAS. At Ser896 the chain carries Phosphoserine. Residues 965–987 show a composition bias toward low complexity; sequence APTSTASPATGTAAAAQGTPASA.

This sequence belongs to the proteasome subunit S1 family. Component of the 19S regulatory particle (RP/PA700) base subcomplex of the 26S proteasome. The 26S proteasome is composed of a core protease (CP), known as the 20S proteasome, capped at one or both ends by the 19S regulatory particle (RP/PA700). The RP/PA700 complex is composed of at least 17 different subunits in two subcomplexes, the base and the lid, which form the portions proximal and distal to the 20S proteolytic core, respectively. In terms of tissue distribution, ubiquitous with highest expression in flowers.

Functionally, acts as a regulatory subunit of the 26 proteasome which is involved in the ATP-dependent degradation of ubiquitinated proteins. This is 26S proteasome non-ATPase regulatory subunit 1 homolog A (RPN2A) from Arabidopsis thaliana (Mouse-ear cress).